A 410-amino-acid chain; its full sequence is Proteasomal ubiquitin receptor ADRM1 (410 aa).

In terms of domain architecture, Pru spans 17–130; sequence SSSKYLVEFR…RKVNEYLNNP (114 aa). S18 carries the post-translational modification Phosphoserine. Residues 191 to 257 show a composition bias toward low complexity; it reads GSGGPATSSS…PAAQTPSLPA (67 aa). 2 disordered regions span residues 191 to 264 and 381 to 410; these read GSGG…SSTQ and FAKAMEGSDSKTDDGDSKDKKDDDEDMSLD. The 115-residue stretch at 281 to 395 folds into the DEUBAD domain; that stretch reads PAMPTEGSGV…EGSDSKTDDG (115 aa). A compositionally biased stretch (basic and acidic residues) spans 381-401; the sequence is FAKAMEGSDSKTDDGDSKDKK.

It belongs to the ADRM1 family. As to quaternary structure, component of the 19S proteasome regulatory particle complex. The 26S proteasome consists of a 20S core particle (CP) and two 19S regulatory subunits (RP).

It localises to the cytoplasm. The protein localises to the nucleus. Its function is as follows. Component of the 26S proteasome, a multiprotein complex involved in the ATP-dependent degradation of ubiquitinated proteins. This complex plays a key role in the maintenance of protein homeostasis by removing misfolded or damaged proteins, which could impair cellular functions, and by removing proteins whose functions are no longer required. Therefore, the proteasome participates in numerous cellular processes, including cell cycle progression, apoptosis, or DNA damage repair. Within the complex, functions as a proteasomal ubiquitin receptor. The polypeptide is Proteasomal ubiquitin receptor ADRM1 (adrm1b) (Danio rerio (Zebrafish)).